The primary structure comprises 106 residues: Violacin-A (106 aa).

Positions 1–29 are cleaved as a signal peptide; it reads MDAQKMKMVIGLVLVATTAFALMIPAASA. A propeptide spanning residues 30–79 is cleaved from the precursor; the sequence is VDDFITRRAYDNLVKSGAIKDIPVMAKTIISNPVLEEGMLTYYTNKKLGD. 3 disulfide bridges follow: C84/C98, C88/C100, and C93/C105.

The protein belongs to the cyclotide family. Moebius subfamily. Post-translationally, violacin-A is not a cyclic peptide.

Functionally, probably participates in a plant defense mechanism. Has low hemolytic activity. The chain is Violacin-A from Viola odorata (Sweet violet).